Here is a 238-residue protein sequence, read N- to C-terminus: Epoxyqueuosine reductase QueH (238 aa).

Residues Cys-43, Cys-44, Cys-129, and Cys-132 each contribute to the [4Fe-4S] cluster site. Cys-211 and Cys-213 form a disulfide bridge.

This sequence belongs to the QueH family.

It carries out the reaction epoxyqueuosine(34) in tRNA + AH2 = queuosine(34) in tRNA + A + H2O. Its pathway is tRNA modification; tRNA-queuosine biosynthesis. Functionally, catalyzes the conversion of epoxyqueuosine (oQ) to queuosine (Q), which is a hypermodified base found in the wobble positions of tRNA(Asp), tRNA(Asn), tRNA(His) and tRNA(Tyr). The sequence is that of Epoxyqueuosine reductase QueH from Staphylococcus epidermidis (strain ATCC 12228 / FDA PCI 1200).